We begin with the raw amino-acid sequence, 134 residues long: MESLSQLVKSTLPNYLSNLPIPDSVGGWFKLSFKDWLALIPPTVVVAGIGYTGYLAFCPAAQARCSATKSGRCNNQIRKHEPKVVDTIDVEDIADKAAFCRCWKSKNWPYCDGSHGEHNKLTGDNVGPVVVKKQ.

Residues 1–35 (MESLSQLVKSTLPNYLSNLPIPDSVGGWFKLSFKD) lie on the Lumenal side of the membrane. Residues 36-58 (WLALIPPTVVVAGIGYTGYLAFC) form a helical membrane-spanning segment. The Cytoplasmic portion of the chain corresponds to 59–134 (PAAQARCSAT…NVGPVVVKKQ (76 aa)). Residues C100, C102, C111, and H115 each coordinate [2Fe-2S] cluster.

This sequence belongs to the CISD protein family. CISD2 subfamily. It depends on [2Fe-2S] cluster as a cofactor.

Its subcellular location is the endoplasmic reticulum membrane. The sequence is that of CDGSH iron-sulfur domain-containing protein 2 homolog from Drosophila ananassae (Fruit fly).